Consider the following 92-residue polypeptide: Defensin-like protein 96 (92 aa).

Residues 1-29 (MGSLRLSTVAIAVVVCLSILLISPTEVDG) form the signal peptide. 4 disulfide bridges follow: C33/C80, C40/C65, C49/C77, and C53/C79.

This sequence belongs to the DEFL family.

Its subcellular location is the secreted. The sequence is that of Defensin-like protein 96 from Arabidopsis thaliana (Mouse-ear cress).